Consider the following 60-residue polypeptide: Short neurotoxin 1 (60 aa).

Disulfide bonds link Cys3/Cys22, Cys17/Cys39, Cys41/Cys52, and Cys53/Cys58.

Belongs to the three-finger toxin family. Short-chain subfamily. Type I alpha-neurotoxin sub-subfamily. In terms of tissue distribution, expressed by the venom gland.

It is found in the secreted. Its function is as follows. Binds to muscle nicotinic acetylcholine receptor (nAChR) and inhibit acetylcholine from binding to the receptor, thereby impairing neuromuscular transmission. The sequence is that of Short neurotoxin 1 from Hydrophis ornatus (Ornate reef seasnake).